Reading from the N-terminus, the 368-residue chain is (3S,6E)-nerolidol synthase (368 aa).

Residues D91, N228, and S232 each contribute to the Mg(2+) site. The short motif at 91-95 (DDLLE) is the DDXXE motif element.

Belongs to the terpene synthase family. It depends on Mg(2+) as a cofactor. The cofactor is Mn(2+).

The catalysed reaction is (2E,6E)-farnesyl diphosphate + H2O = (3S,6E)-nerolidol + diphosphate. It carries out the reaction (2E)-geranyl diphosphate + H2O = (S)-linalool + diphosphate. The protein operates within secondary metabolite biosynthesis; terpenoid biosynthesis. In terms of biological role, sesquiterpene synthase converting farnesyl diphosphate to nerolidol. Also has a monoterpene synthase activity, converting geranyl diphosphate into linalool as the major product. Has no diterpene synthase activity. This chain is (3S,6E)-nerolidol synthase, found in Selaginella moellendorffii (Spikemoss).